The primary structure comprises 347 residues: MEEQLIPIQWKDDALVLLDQTLLPNEVVYESFNTAEGVWDAIQVMKVRGAPAIGVSAAYGVYLGVKEFVESTEAEFIDEVKRVCAYLATSRPTAVNLFWALERMESVATDHTHLSITQLKDRLLEEAKEIHREDEEINRQIGEHALTLFHDGMGVLTHCNAGALATTKYGTATAPMYLAKEKGWDLKIYSDETRPRLQGSTLTALELQRAGIDVTVITDNMAAMVMSQGKIDAVIVGCDRVAANGDVANKIGTLGVSILAKYYNIPFYVAAPTPTIDLKTPTGKEIPIEERDASEVINRFGQYSAPKESKVYNPAFDVTPHENVIAIITEKGIVKAPFTENLKNLFQ.

Residues 48–50 (RGA), arginine 91, and glutamine 198 each bind substrate. The active-site Proton donor is aspartate 239. 249–250 (NK) is a binding site for substrate.

This sequence belongs to the EIF-2B alpha/beta/delta subunits family. DrdI subfamily.

The catalysed reaction is 5-deoxy-alpha-D-ribose 1-phosphate = 5-deoxy-D-ribulose 1-phosphate. It functions in the pathway carbohydrate degradation. Functionally, catalyzes the isomerization of 5-deoxy-alpha-D-ribose 1-phosphate to 5-deoxy-D-ribulose 1-phosphate, as part of a 5-deoxyribose salvage pathway that recycles this toxic radical SAM enzyme by-product to mainstream metabolites. This Bacillus thuringiensis subsp. konkukian (strain 97-27) protein is 5-deoxyribose 1-phosphate isomerase.